Consider the following 239-residue polypeptide: Phosphoribosylaminoimidazole-succinocarboxamide synthase (239 aa).

It belongs to the SAICAR synthetase family.

The catalysed reaction is 5-amino-1-(5-phospho-D-ribosyl)imidazole-4-carboxylate + L-aspartate + ATP = (2S)-2-[5-amino-1-(5-phospho-beta-D-ribosyl)imidazole-4-carboxamido]succinate + ADP + phosphate + 2 H(+). The protein operates within purine metabolism; IMP biosynthesis via de novo pathway; 5-amino-1-(5-phospho-D-ribosyl)imidazole-4-carboxamide from 5-amino-1-(5-phospho-D-ribosyl)imidazole-4-carboxylate: step 1/2. The sequence is that of Phosphoribosylaminoimidazole-succinocarboxamide synthase from Dichelobacter nodosus (strain VCS1703A).